Reading from the N-terminus, the 204-residue chain is Octanoyltransferase (204 aa).

The BPL/LPL catalytic domain maps to 27–202 (QGGEEALLLL…RFQPLLNLHL (176 aa)). Substrate contacts are provided by residues 65 to 72 (RGGDVTYH), 132 to 134 (SIG), and 145 to 147 (GFA). C163 functions as the Acyl-thioester intermediate in the catalytic mechanism.

It belongs to the LipB family.

It is found in the cytoplasm. It catalyses the reaction octanoyl-[ACP] + L-lysyl-[protein] = N(6)-octanoyl-L-lysyl-[protein] + holo-[ACP] + H(+). It functions in the pathway protein modification; protein lipoylation via endogenous pathway; protein N(6)-(lipoyl)lysine from octanoyl-[acyl-carrier-protein]: step 1/2. Catalyzes the transfer of endogenously produced octanoic acid from octanoyl-acyl-carrier-protein onto the lipoyl domains of lipoate-dependent enzymes. Lipoyl-ACP can also act as a substrate although octanoyl-ACP is likely to be the physiological substrate. The protein is Octanoyltransferase of Citrifermentans bemidjiense (strain ATCC BAA-1014 / DSM 16622 / JCM 12645 / Bem) (Geobacter bemidjiensis).